A 450-amino-acid polypeptide reads, in one-letter code: UDP-N-acetylmuramoylalanine--D-glutamate ligase (450 aa).

119-125 (GSNGKTT) contacts ATP.

This sequence belongs to the MurCDEF family.

The protein resides in the cytoplasm. It catalyses the reaction UDP-N-acetyl-alpha-D-muramoyl-L-alanine + D-glutamate + ATP = UDP-N-acetyl-alpha-D-muramoyl-L-alanyl-D-glutamate + ADP + phosphate + H(+). Its pathway is cell wall biogenesis; peptidoglycan biosynthesis. Its function is as follows. Cell wall formation. Catalyzes the addition of glutamate to the nucleotide precursor UDP-N-acetylmuramoyl-L-alanine (UMA). The polypeptide is UDP-N-acetylmuramoylalanine--D-glutamate ligase (Bacillus cereus (strain AH187)).